The following is a 371-amino-acid chain: Opine oxidase subunit B (371 aa).

In terms of assembly, heterodimer of a subunit A and a subunit B.

The protein operates within opine metabolism; octopine degradation. Oxidative cleavage of octopine into L-arginine and pyruvate. The protein is Opine oxidase subunit B (ooxB) of Rhizobium meliloti (Ensifer meliloti).